A 625-amino-acid chain; its full sequence is Histone-lysine N-methyltransferase set9 (625 aa).

The region spanning 120-234 (SPFEVTTTNR…IGEEITVSYG (115 aa)) is the SET domain. 5 disordered regions span residues 260–348 (PHVD…ETSI), 368–405 (GSAV…TSIG), 432–451 (ITGQ…DMLS), 457–476 (TDNP…HGVV), and 582–625 (VSFG…RMTM). 2 stretches are compositionally biased toward polar residues: residues 269–286 (SKAS…NDSL) and 372–386 (EVSQ…SSPS). Basic residues predominate over residues 462 to 473 (KPKRSRGSRWKH). The span at 593–610 (SEPRTETEDSEACDDRRN) shows a compositional bias: basic and acidic residues. The span at 611-625 (TRASRTRTRSLRMTM) shows a compositional bias: basic residues.

The protein belongs to the class V-like SAM-binding methyltransferase superfamily. Histone-lysine methyltransferase family. Suvar4-20 subfamily.

The protein resides in the nucleus. The protein localises to the chromosome. It carries out the reaction L-lysyl(20)-[histone H4] + 3 S-adenosyl-L-methionine = N(6),N(6),N(6)-trimethyl-L-lysyl(20)-[histone H4] + 3 S-adenosyl-L-homocysteine + 3 H(+). In terms of biological role, histone methyltransferase that trimethylates 'Lys-20' of histone H4 to form H4K20me3. This Aspergillus oryzae (strain ATCC 42149 / RIB 40) (Yellow koji mold) protein is Histone-lysine N-methyltransferase set9 (set9).